A 487-amino-acid polypeptide reads, in one-letter code: MGSRLHVQEIKKGPPLPFKDDIRAFTREYAESLDAQDPLRHFRDEFIIPSKKDLKRKTLNANENIEDSSDPRSIYLCGNSLGLQPRNTRKYLEHYLRTWAIKGVTGHFTPHDDQLLPPFVDVDDAGAKLMAPIVGALESEVAVMGTLTANLHFLMASFYQPTKEKYKIILEGKAFPSDHYAVESQIQHHNLDPKDAMVLIELENLDRPILDTEKILRVIDEHASSTALILLSGIQFYTGQYFDIEKITAYAHSKGIIIGWDCAHAAGNVELKLHDWNVDFAAWCNYKYLNSGPGGMAGLFVHENHGRVDMTKVGSKDEPFRPRLSGWWGDDKKTRFRMENRFVPQPGAAGFQLSNPSVLDMNAVAASLEIFNRTSMAEIRKKSLDLTGYLEHLLLKYPLDAAPEDKPFSIITPSNPAERGAQLSLRLGPGLLDNVLEVLEENGVVIDERKPDVIRVAPAPLYNTYADVWQFCQIFFDACQKAVRARK.

Pyridoxal 5'-phosphate-binding positions include Leu-147, Thr-148, 175 to 178 (FPSD), Ser-232, Asp-261, His-264, and Tyr-286. Lys-287 is subject to N6-(pyridoxal phosphate)lysine. Pyridoxal 5'-phosphate is bound by residues Trp-327 and Asn-355.

The protein belongs to the kynureninase family. As to quaternary structure, homodimer. Requires pyridoxal 5'-phosphate as cofactor.

The protein resides in the cytoplasm. The catalysed reaction is L-kynurenine + H2O = anthranilate + L-alanine + H(+). It catalyses the reaction 3-hydroxy-L-kynurenine + H2O = 3-hydroxyanthranilate + L-alanine + H(+). It functions in the pathway amino-acid degradation; L-kynurenine degradation; L-alanine and anthranilate from L-kynurenine: step 1/1. It participates in cofactor biosynthesis; NAD(+) biosynthesis; quinolinate from L-kynurenine: step 2/3. Functionally, catalyzes the cleavage of L-kynurenine (L-Kyn) and L-3-hydroxykynurenine (L-3OHKyn) into anthranilic acid (AA) and 3-hydroxyanthranilic acid (3-OHAA), respectively. The chain is Kynureninase 1 (bna5-1) from Aspergillus oryzae (strain ATCC 42149 / RIB 40) (Yellow koji mold).